The primary structure comprises 881 residues: Probable inorganic carbon transporter subunit DabA (881 aa).

Positions 399, 401, 585, and 600 each coordinate Zn(2+).

Belongs to the inorganic carbon transporter (TC 9.A.2) DabA family. In terms of assembly, forms a complex with DabB. Zn(2+) serves as cofactor.

The protein resides in the cell membrane. Functionally, part of an energy-coupled inorganic carbon pump. This chain is Probable inorganic carbon transporter subunit DabA, found in Geobacillus sp. (strain WCH70).